We begin with the raw amino-acid sequence, 247 residues long: Segregation and condensation protein A (247 aa).

It belongs to the ScpA family. In terms of assembly, component of a cohesin-like complex composed of ScpA, ScpB and the Smc homodimer, in which ScpA and ScpB bind to the head domain of Smc. The presence of the three proteins is required for the association of the complex with DNA.

It is found in the cytoplasm. In terms of biological role, participates in chromosomal partition during cell division. May act via the formation of a condensin-like complex containing Smc and ScpB that pull DNA away from mid-cell into both cell halves. The protein is Segregation and condensation protein A of Caldanaerobacter subterraneus subsp. tengcongensis (strain DSM 15242 / JCM 11007 / NBRC 100824 / MB4) (Thermoanaerobacter tengcongensis).